Reading from the N-terminus, the 873-residue chain is Tyrosine-protein kinase transforming protein Fps (873 aa).

Residues 1 to 46 are disordered; it reads ASGQLHRPQPQEHTSTSAAAGTWRLTQASESRHRLPHCSAAPSHQD. Residues 11–29 show a composition bias toward polar residues; that stretch reads QEHTSTSAAAGTWRLTQAS. The region spanning 50-313 is the F-BAR domain; the sequence is MGFGPELWCP…AVEMIDPATE (264 aa). The interval 445-471 is disordered; that stretch reads GSEEPPPALPLQEDRQSARSTDQERSG. Over residues 456–469 the composition is skewed to basic and acidic residues; the sequence is QEDRQSARSTDQER. Residues 511–600 form the SH2 domain; it reads WYHGAIPRSE…KSGIVLTRAV (90 aa). The Protein kinase domain maps to 612-865; that stretch reads VLLGERIGRG…PSFGAVHQDL (254 aa). Residues 618-626 and Lys641 contribute to the ATP site; that span reads IGRGNFGEV. The active-site Proton acceptor is the Asp734. Tyr764 bears the Phosphotyrosine; by autocatalysis mark.

The protein belongs to the protein kinase superfamily. Tyr protein kinase family. Fes/fps subfamily.

The catalysed reaction is L-tyrosyl-[protein] + ATP = O-phospho-L-tyrosyl-[protein] + ADP + H(+). The protein is Tyrosine-protein kinase transforming protein Fps (V-FPS) of Gallus gallus (Chicken).